We begin with the raw amino-acid sequence, 530 residues long: MARFRRADLAAAGVMLLCHFLTDRFQFAHGEPGHHTNDWIYEVTNAFPWNEEGVEVDSQAYNHRWKRNVDPFKAVDTNRASMGQASPESKGFTDLLLDDGQDNNTQIEEDTDHNYYISRIYGPADSASRDLWVNIDQMEKDKVKIHGILSNTHRQAARVNLSFDFPFYGHFLNEVTVATGGFIYTGEVVHRMLTATQYIAPLMANFDPSVSRNSTVRYFDNGTALVVQWDHVHLQDNYNLGSFTFQATLLMDGRIIFGYKEIPVLVTQISSTNHPVKVGLSDAFVVVHRIQQIPNVRRRTIYEYHRVELQMSKITNISAVEMTPLPTCLQFNGCGPCVSSQIGFNCSWCSKLQRCSSGFDRHRQDWVDSGCPEEVQSKEKMCEKTEPGETSQTTTTSHTTTMQFRVLTTTRRAVTSQMPTSLPTEDDTKIALHLKDSGASTDDSAAEKKGGTLHAGLIVGILILVLIIAAAILVTVYMYHHPTSAASIFFIERRPSRWPAMKFRRGSGHPAYAEVEPVGEKEGFIVSEQC.

A signal peptide spans 1 to 30; the sequence is MARFRRADLAAAGVMLLCHFLTDRFQFAHG. Over 31–455 the chain is Extracellular; sequence EPGHHTNDWI…AEKKGGTLHA (425 aa). N-linked (GlcNAc...) asparagine glycans are attached at residues Asn103 and Asn160. In terms of domain architecture, PSI spans 327–372; it reads TCLQFNGCGPCVSSQIGFNCSWCSKLQRCSSGFDRHRQDWVDSGCP. Positions 378-387 are enriched in basic and acidic residues; that stretch reads KEKMCEKTEP. Positions 378–399 are disordered; it reads KEKMCEKTEPGETSQTTTTSHT. Low complexity predominate over residues 390–399; sequence TSQTTTTSHT. A helical membrane pass occupies residues 456 to 476; it reads GLIVGILILVLIIAAAILVTV. The Cytoplasmic segment spans residues 477-530; that stretch reads YMYHHPTSAASIFFIERRPSRWPAMKFRRGSGHPAYAEVEPVGEKEGFIVSEQC. Ser507 is modified (phosphoserine).

This sequence belongs to the plexin family. Interacts with CTTN. In terms of tissue distribution, expressed in tumor endothelium and in vessels of some normal tissues, such as the muscle and lung.

It localises to the membrane. In terms of biological role, may play a role in tumor angiogenesis. In Mus musculus (Mouse), this protein is Plexin domain-containing protein 2 (Plxdc2).